A 253-amino-acid chain; its full sequence is Ubiquinone/menaquinone biosynthesis C-methyltransferase UbiE (253 aa).

S-adenosyl-L-methionine is bound by residues threonine 76, aspartate 97, and 125 to 126; that span reads NA.

This sequence belongs to the class I-like SAM-binding methyltransferase superfamily. MenG/UbiE family.

It catalyses the reaction a 2-demethylmenaquinol + S-adenosyl-L-methionine = a menaquinol + S-adenosyl-L-homocysteine + H(+). The catalysed reaction is a 2-methoxy-6-(all-trans-polyprenyl)benzene-1,4-diol + S-adenosyl-L-methionine = a 5-methoxy-2-methyl-3-(all-trans-polyprenyl)benzene-1,4-diol + S-adenosyl-L-homocysteine + H(+). The protein operates within quinol/quinone metabolism; menaquinone biosynthesis; menaquinol from 1,4-dihydroxy-2-naphthoate: step 2/2. It functions in the pathway cofactor biosynthesis; ubiquinone biosynthesis. In terms of biological role, methyltransferase required for the conversion of demethylmenaquinol (DMKH2) to menaquinol (MKH2) and the conversion of 2-polyprenyl-6-methoxy-1,4-benzoquinol (DDMQH2) to 2-polyprenyl-3-methyl-6-methoxy-1,4-benzoquinol (DMQH2). The protein is Ubiquinone/menaquinone biosynthesis C-methyltransferase UbiE of Rhodopseudomonas palustris (strain BisB5).